The chain runs to 1263 residues: Multidrug resistance protein sirA (1263 aa).

The segment at methionine 1 to aspartate 21 is disordered. Transmembrane regions (helical) follow at residues leucine 57–isoleucine 77, isoleucine 104–asparagine 124, lysine 179–valine 199, and phenylalanine 206–methionine 226. The ABC transmembrane type-1 1 domain occupies leucine 57–leucine 347. A glycan (N-linked (GlcNAc...) asparagine) is linked at asparagine 232. 2 consecutive transmembrane segments (helical) span residues valine 284–isoleucine 304 and valine 318–valine 338. Positions isoleucine 380–arginine 625 constitute an ABC transporter 1 domain. Asparagine 384 is a glycosylation site (N-linked (GlcNAc...) asparagine). Position 415 to 422 (glycine 415 to serine 422) interacts with ATP. Residue asparagine 469 is glycosylated (N-linked (GlcNAc...) asparagine). Positions proline 635–lysine 672 are disordered. A run of 6 helical transmembrane segments spans residues valine 699 to phenylalanine 719, phenylalanine 740 to glycine 760, valine 817 to valine 839, leucine 843 to valine 865, leucine 930 to valine 950, and phenylalanine 960 to phenylalanine 980. Residues valine 699–lysine 986 form the ABC transmembrane type-1 2 domain. The region spanning valine 1021–leucine 1259 is the ABC transporter 2 domain. Position 1056-1063 (glycine 1056–serine 1063) interacts with ATP.

It belongs to the ABC transporter superfamily. ABCB family. Multidrug resistance exporter (TC 3.A.1.201) subfamily.

It localises to the cell membrane. It catalyses the reaction ATP + H2O + xenobioticSide 1 = ADP + phosphate + xenobioticSide 2.. Sirodesmin transporter that provides the dual role of sirodesmin export and self-protection. Also provides tolerance to gliotoxin. In Leptosphaeria maculans (Blackleg fungus), this protein is Multidrug resistance protein sirA.